Reading from the N-terminus, the 720-residue chain is Hexanoyl-CoA synthase (720 aa).

Residues 242-262 (VDAVVIYLAIVLAGYVVVSIA) traverse the membrane as a helical segment. Position 290–293 (290–293 (RGKK)) interacts with CoA. ATP is bound by residues 477–479 (GEA), 499–504 (EMCGGT), Glu-585, and Arg-607. Gly-615 contributes to the CoA binding site. Lys-618 serves as a coordination point for ATP. A CoA-binding site is contributed by Gln-681.

The protein belongs to the ATP-dependent AMP-binding enzyme family. The cofactor is Mg(2+). Accumulates in glandular trichomes, especially in female flowers. Present at low levels in roots, stems and leaves.

It localises to the cytoplasm. The protein localises to the cytosol. Its subcellular location is the membrane. It catalyses the reaction hexanoate + ATP + CoA = hexanoyl-CoA + AMP + diphosphate. The protein operates within secondary metabolite biosynthesis; terpenoid biosynthesis. With respect to regulation, inhibitied by high CoA concentrations. Its function is as follows. Involved in the biosynthesis of cannabinoids-related terpenophenolic natural products, which have pharmacological activity. Acyl-activating enzyme that catalyzes the conversion of hexanoic acid to hexanoyl-CoA, precursor of the cannabinoid pathway. Can also activate other fatty acids including heptanoate, octanoate and nonanoate. The sequence is that of Hexanoyl-CoA synthase from Cannabis sativa (Hemp).